Here is a 310-residue protein sequence, read N- to C-terminus: Thioredoxin reductase (310 aa).

Residue 34–41 (NGMQPGGQ) participates in FAD binding. The cysteines at positions 135 and 138 are disulfide-linked. Residue 281-290 (DVQDKIYRQA) coordinates FAD.

It belongs to the class-II pyridine nucleotide-disulfide oxidoreductase family. In terms of assembly, homodimer. The cofactor is FAD.

It is found in the cytoplasm. It carries out the reaction [thioredoxin]-dithiol + NADP(+) = [thioredoxin]-disulfide + NADPH + H(+). The sequence is that of Thioredoxin reductase (trxB) from Rickettsia conorii (strain ATCC VR-613 / Malish 7).